A 563-amino-acid polypeptide reads, in one-letter code: Arginine--tRNA ligase (563 aa).

The short motif at 120–130 (PNIAKPFHVGH) is the 'HIGH' region element.

Belongs to the class-I aminoacyl-tRNA synthetase family. As to quaternary structure, monomer.

It localises to the cytoplasm. The enzyme catalyses tRNA(Arg) + L-arginine + ATP = L-arginyl-tRNA(Arg) + AMP + diphosphate. This is Arginine--tRNA ligase from Clostridium beijerinckii (strain ATCC 51743 / NCIMB 8052) (Clostridium acetobutylicum).